Consider the following 282-residue polypeptide: Putative hydrolase Bamb_4846 (282 aa).

Mg(2+) is bound by residues Glu124, Glu126, and Asp155.

The protein belongs to the FAH family. The cofactor is Mg(2+).

The sequence is that of Putative hydrolase Bamb_4846 from Burkholderia ambifaria (strain ATCC BAA-244 / DSM 16087 / CCUG 44356 / LMG 19182 / AMMD) (Burkholderia cepacia (strain AMMD)).